We begin with the raw amino-acid sequence, 307 residues long: Putative S-adenosyl-L-methionine-dependent methyltransferase MUL_4430 (307 aa).

Residues Asp-128 and 157–158 (DL) contribute to the S-adenosyl-L-methionine site.

This sequence belongs to the UPF0677 family.

In terms of biological role, exhibits S-adenosyl-L-methionine-dependent methyltransferase activity. The polypeptide is Putative S-adenosyl-L-methionine-dependent methyltransferase MUL_4430 (Mycobacterium ulcerans (strain Agy99)).